A 104-amino-acid polypeptide reads, in one-letter code: Flagellar hook-basal body complex protein FliE (104 aa).

The protein belongs to the FliE family.

Its subcellular location is the bacterial flagellum basal body. The sequence is that of Flagellar hook-basal body complex protein FliE from Escherichia coli O139:H28 (strain E24377A / ETEC).